The sequence spans 604 residues: Glutamine--fructose-6-phosphate aminotransferase [isomerizing] (604 aa).

Cys-2 acts as the Nucleophile; for GATase activity in catalysis. The 217-residue stretch at 2–218 (CGIVGVVGNR…DKELVILTKD (217 aa)) folds into the Glutamine amidotransferase type-2 domain. SIS domains are found at residues 284–423 (IITS…ANGK) and 456–594 (VQAL…VDKP). Lys-599 functions as the For Fru-6P isomerization activity in the catalytic mechanism.

Homodimer.

The protein localises to the cytoplasm. The catalysed reaction is D-fructose 6-phosphate + L-glutamine = D-glucosamine 6-phosphate + L-glutamate. Functionally, catalyzes the first step in hexosamine metabolism, converting fructose-6P into glucosamine-6P using glutamine as a nitrogen source. The chain is Glutamine--fructose-6-phosphate aminotransferase [isomerizing] from Streptococcus pyogenes serotype M18 (strain MGAS8232).